The sequence spans 2303 residues: Adenomatous polyposis coli protein 2 (2303 aa).

The stretch at 8 to 59 forms a coiled coil; that stretch reads YEQLVRQVEALKAENSHLRQELRDNSSHLSKLETETSGMKEVLKHLQGKLEQ. Disordered regions lie at residues 94–120 and 247–270; these read PTLGPEPAARTPEGSPVHGSGPSKDSF and VPVDEDPETEVPTHPEDGTPQPGN. ARM repeat units lie at residues 302-341, 479-518, 522-562, 566-609, 615-654, and 657-696; these read PESCVAMRRSGCLPLLLQILHGTEAAAGGRAGAPGAPGAK, ANKATLCARRGCMEAIVAQLASDSEELHQVVSSILRNLSW, INSK…NLSA, ENKA…NVSS, EDYRQVLRDHNCLQTLLQHLTSHSLTIVSNACGTLWNLSA, and ARDQELLWDLGAVGMLRNLVHSKHKMIAMGSAAALRNLLA. Disordered regions lie at residues 744–764 and 816–835; these read KQGPPAAEAATKKPLPPLRHL and LARTPPTRRGGKEAEKDTSG. The span at 825–834 shows a compositional bias: basic and acidic residues; that stretch reads GGKEAEKDTS. Residues 840–864 adopt a coiled-coil conformation; that stretch reads AAKAKAKLALAVARIDQLVEDISAL. 4 disordered regions span residues 867–908, 953–986, 1069–1152, and 1173–1228; these read SSDD…AGSR, RREDPRCGQPRPSRLDLDLPGCQAEPPAREATSA, RCSS…ENYV, and SPSI…EATQ. The segment covering 869 to 878 has biased composition (low complexity); the sequence is DDSFSLSSGD. Repeat 1 spans residues 1058-1077; that stretch reads LAAQEGPLSLSRCSSLSSLS. Residues 1058-1587 form a 5 X 20 AA approximate repeat of F-X-V-E-X-T-P-X-C-F-S-R-X-S-S-L-S-S-L-S region; sequence LAAQEGPLSL…SLSSSASSLS (530 aa). An interaction with CTNNB1 region spans residues 1058–1587; that stretch reads LAAQEGPLSL…SLSSSASSLS (530 aa). Residues 1069-1084 show a composition bias toward low complexity; the sequence is RCSSLSSLSSAGRPGP. Acidic residues predominate over residues 1088-1101; that stretch reads GDLDDSDSSLEGLE. Over residues 1143–1152 the composition is skewed to polar residues; the sequence is TPSSSSENYV. The stretch at 1150-1169 is repeat 2; sequence NYVQETPLVLSRCSSVSSLG. The segment covering 1173–1186 has biased composition (low complexity); the sequence is SPSIASSIPSEPCS. Over residues 1202 to 1212 the composition is skewed to polar residues; it reads PGQTMPPSRSK. Residues 1263–1282 form repeat 3; it reads FTVEKPDENFSCASSLSALA. Disordered regions lie at residues 1307 to 1335, 1382 to 1497, 1510 to 1684, 1724 to 2031, and 2046 to 2232; these read GAGGAGLHFAGHRRREEGPAPTGSRPRGA, PAQE…QSLC, YGND…LDSV, LSVG…RGRP, and LRAA…DVDG. The segment covering 1390-1410 has biased composition (polar residues); it reads TDSAEGTPVNFSSAASLSDET. Residues 1391-1410 form repeat 4; it reads DSAEGTPVNFSSAASLSDET. Composition is skewed to basic and acidic residues over residues 1477–1489 and 1537–1548; these read ADKDGSKPGRTRG and FTRERPQGRKEA. Copy 5 of the repeat occupies 1568–1587; it reads LIADETPPCYSLSSSASSLS. Residues 1578 to 1589 are compositionally biased toward low complexity; it reads SLSSSASSLSEP. S1585 and S1587 each carry phosphoserine. Positions 1638 to 1654 are enriched in basic residues; the sequence is PRRRPPVSGLRRRKPRA. Composition is skewed to basic and acidic residues over residues 1655–1671 and 1739–1755; these read TRLDERPAEGSRERGEE and RQAEGEMGSARRPEKRG. The span at 1819–1830 shows a compositional bias: low complexity; it reads APPCLAQPAAPA. The interval 1821–1900 is required for localization to microtubules and function in microtubule stabilization; it reads PCLAQPAAPA…PPVTQAAGAL (80 aa). A compositionally biased stretch (polar residues) spans 1851-1860; that stretch reads ELATLSQPPR. Low complexity-rich tracts occupy residues 1868 to 1886, 1971 to 1984, 2011 to 2026, 2049 to 2062, and 2113 to 2123; these read LAKTPSSSSSQTSPASQPL, GLVRVASALSSGSE, LSSAESAASAPQGASP, APRQGPAPARQRPP, and GAVPAAPASAD. Residues 2067 to 2144 form an interaction with MAPRE1 and MAPRE3 region; sequence SPGERPARRT…PLPRVAAPGT (78 aa). Over residues 2124 to 2135 the composition is skewed to basic and acidic residues; it reads AARRSSDGEPRP. Residues 2200–2209 are compositionally biased toward polar residues; it reads KTNSSTSPSL.

Belongs to the adenomatous polyposis coli (APC) family. Interacts with PSRC1. Interacts with APC. Interacts with CTNNB1. Interacts with MAPRE1 and MAPRE3. Interacts with TP53BP. Interacts possibly with AXIN2. Widely expressed (at protein level). Specifically expressed in the CNS.

It localises to the cytoplasm. It is found in the cytoskeleton. The protein localises to the golgi apparatus. The protein resides in the perinuclear region. Functionally, stabilizes microtubules and may regulate actin fiber dynamics through the activation of Rho family GTPases. May also function in Wnt signaling by promoting the rapid degradation of CTNNB1. The polypeptide is Adenomatous polyposis coli protein 2 (Homo sapiens (Human)).